Reading from the N-terminus, the 238-residue chain is Ribosomal RNA small subunit methyltransferase G (238 aa).

Residues Gly-78, Phe-83, 129 to 130 (AE), and Arg-148 contribute to the S-adenosyl-L-methionine site. The segment at 217–238 (KKKETPKKYPRKAGTPAKSPIK) is disordered.

The protein belongs to the methyltransferase superfamily. RNA methyltransferase RsmG family.

Its subcellular location is the cytoplasm. Functionally, specifically methylates the N7 position of a guanine in 16S rRNA. The chain is Ribosomal RNA small subunit methyltransferase G from Lactococcus lactis subsp. cremoris (strain MG1363).